The primary structure comprises 1012 residues: Structural polyprotein (1012 aa).

An a divalent metal cation-binding site is contributed by aspartate 30. Residues alanine 514–alanine 755 enclose the Peptidase S50 domain. Residue serine 653 is the Nucleophile of the active site. Lysine 692 is a catalytic residue. A disordered region spans residues methionine 972–glutamate 1012. Residues arginine 975 to proline 986 are compositionally biased toward basic residues. The segment at isoleucine 1003–glutamate 1012 is interaction with VP1 protein.

Homotrimer. A central divalent metal stabilizes the VP2 trimer. Interacts with host ITGA4/ITGB1. As to quaternary structure, homodimer. Interacts (via C-terminus) with VP1 in the cytoplasm. Interacts with VP2. Post-translationally, specific enzymatic cleavages yield mature proteins. The capsid assembly seems to be regulated by polyprotein processing. The protease VP4 cleaves itself off the polyprotein, thus releasing pre-VP2 and VP3 within the infected cell. During capsid assembly, the C-terminus of pre-VP2 is further processed by VP4, giving rise to VP2, the external capsid protein and three small peptides that all stay closely associated with the capsid.

It localises to the virion. Its subcellular location is the host cytoplasm. Capsid protein VP2 self assembles to form an icosahedral capsid with a T=13 symmetry, about 70 nm in diameter, and consisting of 260 VP2 trimers. The capsid encapsulates the genomic dsRNA. VP2 is also involved in attachment and entry into the host cell by interacting with host ITGA4/ITGB1. In terms of biological role, the precursor of VP2 plays an important role in capsid assembly. First, pre-VP2 and VP2 oligomers assemble to form a procapsid. Then, the pre-VP2 intermediates may be processed into VP2 proteins by proteolytic cleavage mediated by VP4 to obtain the mature virion. The final capsid is composed of pentamers and hexamers but VP2 has a natural tendency to assemble into all-pentameric structures. Therefore pre-VP2 may be required to allow formation of the hexameric structures. Its function is as follows. Protease VP4 is a serine protease that cleaves the polyprotein into its final products. Pre-VP2 is first partially cleaved, and may be completely processed by VP4 upon capsid maturation. Functionally, capsid protein VP3 plays a key role in virion assembly by providing a scaffold for the capsid made of VP2. May self-assemble to form a T=4-like icosahedral inner-capsid composed of at least 180 trimers. Plays a role in genomic RNA packaging by recruiting VP1 into the capsid and interacting with the dsRNA genome segments to form a ribonucleoprotein complex. Additionally, the interaction of the VP3 C-terminal tail with VP1 removes the inherent structural blockade of the polymerase active site. Thus, VP3 can also function as a transcriptional activator. Structural peptide 1 is a small peptide derived from pre-VP2 C-terminus. It destabilizes and perforates cell membranes, suggesting a role during entry. In terms of biological role, structural peptide 2 is a small peptide derived from pVP2 C-terminus. It is not essential for the virus viability, but viral growth is affected when missing. Its function is as follows. Structural peptide 3 is a small peptide derived from pVP2 C-terminus. It is not essential for the virus viability, but viral growth is affected when missing. Functionally, structural peptide 4 is a small peptide derived from pVP2 C-terminus. It is essential for the virus viability. The polypeptide is Structural polyprotein (Gallus gallus (Chicken)).